The primary structure comprises 308 residues: Pseudouridine-5'-phosphate glycosidase (308 aa).

The Proton donor role is filled by E25. K86 and V106 together coordinate substrate. Mn(2+) is bound at residue D142. A substrate-binding site is contributed by 144–146 (SAD). The active-site Nucleophile is the K163.

The protein belongs to the pseudouridine-5'-phosphate glycosidase family. Homotrimer. Mn(2+) serves as cofactor.

It catalyses the reaction D-ribose 5-phosphate + uracil = psi-UMP + H2O. Its function is as follows. Catalyzes the reversible cleavage of pseudouridine 5'-phosphate (PsiMP) to ribose 5-phosphate and uracil. Functions biologically in the cleavage direction, as part of a pseudouridine degradation pathway. The polypeptide is Pseudouridine-5'-phosphate glycosidase (Symbiobacterium thermophilum (strain DSM 24528 / JCM 14929 / IAM 14863 / T)).